Reading from the N-terminus, the 215-residue chain is MNIIKPLTCILAMSISGLATAAVTLHVPDDVTLFVANGQKAKLSGSLFASSKTIELPNGENQIVFQYEPYFSQGNDRIGVESNVIIAKFSANDTDLNFELPKYRDHRVAEQEIKQMQWQLVDEQGAAVTKSEDKLVKSGMQIGRDYAREAADYNQTGGIAAIGTAVSVATIKTEPVANVETKVKAGDNTAEEMLHFWYDKADEATKARFKAYINQ.

An N-terminal signal peptide occupies residues 1-21 (MNIIKPLTCILAMSISGLATA).

Belongs to the UPF0319 family.

This Vibrio vulnificus (strain CMCP6) protein is UPF0319 protein VV2_0960.